The following is a 757-amino-acid chain: Transmembrane channel-like protein 1 (757 aa).

Positions 1-74 are disordered; that stretch reads MLQIQVEEKE…RRRLRRGAEE (74 aa). Topologically, residues 1-176 are cytoplasmic; the sequence is MLQIQVEEKE…KIKAIESQFG (176 aa). Over residues 8–23 the composition is skewed to acidic residues; it reads EKEEDTEESSSEEEED. At S30 the chain carries Phosphoserine. A Phosphothreonine modification is found at T38. Residues 43–54 show a composition bias toward acidic residues; the sequence is NEDDPEPEPEDE. The required for interaction with CIB2 stretch occupies residues 81-130; that stretch reads EELERLKALLDENRQMIATVKCKPWKMEKKIEVLKEAKKFVSENEGALGK. At S122 the chain carries Phosphoserine. The chain crosses the membrane as a helical span at residues 177–214; it reads SSVASYFLFLRWMYGVNMVLFVLTFSLIMLPEYLWGLP. At 215–265 the chain is on the extracellular side; sequence YGSLPRKTVPRAEEASAANFGVLYDFNGLAQYSVLFYGYYDNKRTIGWLNF. A helical membrane pass occupies residues 266–297; that stretch reads RLPLSYFLVGIMCIGYSFLVVLKAMTKNIGDD. Residues 298–352 form a required for interaction with CIB2 region; that stretch reads GGGDDNTFNFSWKVFCSWDYLIGNPETADNKFNSITMNFKEAIIEERAAQVEENI. The Cytoplasmic segment spans residues 298–353; it reads GGGDDNTFNFSWKVFCSWDYLIGNPETADNKFNSITMNFKEAIIEERAAQVEENIH. Residue S308 is modified to Phosphoserine. The chain crosses the membrane as a helical span at residues 354–384; that stretch reads LIRFLRFLANFFVFLTLGASGYLIFWAVKRS. Residues 385–396 are Extracellular-facing; that stretch reads QEFAQQDPDTLG. T394 is modified (phosphothreonine). Residues 397–424 form a helical membrane-spanning segment; the sequence is WWEKNEMNMVMSLLGMFCPTLFDLFAEL. Residues 425–428 lie on the Cytoplasmic side of the membrane; the sequence is EDYH. Residues 429–463 form a helical membrane-spanning segment; that stretch reads PLIALKWLLGRIFALLLGNLYVFILALMDEINNKI. The Extracellular segment spans residues 464-512; it reads EEEKLVKANITLWEANMIKAYNESLSGLSGNTTGAPFFVHPADVPRGPC. The helical transmembrane segment at 513 to 550 threads the bilayer; it reads WETMVGQEFVRLTVSDVLTTYVTILIGDFLRACFVRFC. Topologically, residues 551–569 are cytoplasmic; it reads NYCWCWDLEYGYPSYTEFD. Residues 570–590 traverse the membrane as a helical segment; it reads ISGNVLALIFNQGMIWMGSFF. Residues 591–593 are Extracellular-facing; sequence APS. Residues 594 to 616 form a helical membrane-spanning segment; the sequence is LPGINILRLHTSMYFQCWAVMCC. Residues 617–630 lie on the Cytoplasmic side of the membrane; that stretch reads NVPEARVFKASRSN. The helical transmembrane segment at 631-654 threads the bilayer; the sequence is NFYLGMLLLILFLSTMPVLYMIVS. The Extracellular segment spans residues 655–697; it reads LPPSFDCGPFSGKNRMFEVIGETLEHDFPSWMAKILRQLSNPG. The chain crosses the membrane as a helical span at residues 698–731; the sequence is LVIAVILVMVLTIYYLNATAKGQKAANLDLKKKM. The Cytoplasmic portion of the chain corresponds to 732–757; it reads KQQALENKMRNKKMAAARAAAAAGGQ.

It belongs to the TMC family. In terms of assembly, forms the MET channel composed of TMC dimer (TMC1 or TMC2), TMIE, TOMT, CIB (CIB2 or CIB3), LHFPL5 and PCDH15. Interacts with PIEZO1 and PIEZO2; the interaction may be part of the MET complex. The interaction of TMC1 and TMC2 with TOMT is required for the transportation of TMC1/2 into the stereocilia of hair cells. Interacts (via N-terminus) with both isoforms CD1 and CD3 of PCDH15. Can form a heterodimer with TMC2, TMC5 or TMC7. In terms of tissue distribution, detected in cochlear inner and outer hair cells and in neurosensory epithelia of the vestibular end organs. Also expressed in cortex, cerebellum, eye, colon, ovary and testis.

Its subcellular location is the cell membrane. It catalyses the reaction Ca(2+)(in) = Ca(2+)(out). Functionally, pore-forming subunit of the mechanotransducer (MET) non-selective cation channel complex located at the tips of stereocilia of cochlear hair cells and that mediates sensory transduction in the auditory system. The MET complex is composed of two dimeric pore-forming ion-conducting transmembrane TMC (TMC1 or TMC2) subunits, several auxiliary proteins including LHFPL5, TMIE, CIB2/3 and TOMT, the tip-link PCDH15, and possibly the PIEZO subunits. MET channel is activated by tension in the tip-link extending from the side wall of one stereocilium to the tip of the adjacent shorter stereocilium, where the channel is located. TMC1 MET channel is highly permeable to calcium and likely transports monovalent cations. Also involved in vestibular hair cells transduction current. This Mus musculus (Mouse) protein is Transmembrane channel-like protein 1.